Consider the following 118-residue polypeptide: Disulfide bond formation protein (118 aa).

Residues 1-27 (MRAKWLWMTAVGSLLITVLTAWGWAAA) form the signal peptide. Residues 28–114 (SSQDSKIVYV…VAEAVLRSFF (87 aa)) enclose the Thioredoxin domain. Cysteine 42 and cysteine 45 form a disulfide bridge.

It belongs to the thioredoxin family.

The protein resides in the secreted. In terms of biological role, stimulates the oxidation and reduction of disulfide bonds in vitro. This is Disulfide bond formation protein (bdb) from Brevibacillus choshinensis.